The sequence spans 315 residues: GTP cyclohydrolase MptA (315 aa).

This sequence belongs to the GTP cyclohydrolase IV family. In terms of assembly, homodimer. The cofactor is Fe(2+).

The catalysed reaction is GTP + H2O = 7,8-dihydroneopterin 2',3'-cyclic phosphate + formate + diphosphate + H(+). The protein operates within cofactor biosynthesis; 5,6,7,8-tetrahydromethanopterin biosynthesis. Converts GTP to 7,8-dihydro-D-neopterin 2',3'-cyclic phosphate, the first intermediate in the biosynthesis of coenzyme methanopterin. This Methanococcus maripaludis (strain C7 / ATCC BAA-1331) protein is GTP cyclohydrolase MptA.